A 218-amino-acid polypeptide reads, in one-letter code: Ribose-5-phosphate isomerase A (218 aa).

Substrate contacts are provided by residues 28–31 (TGST), 81–84 (DGAD), and 94–97 (KGGG). E103 (proton acceptor) is an active-site residue. Substrate is bound at residue K121.

This sequence belongs to the ribose 5-phosphate isomerase family. In terms of assembly, homodimer.

It catalyses the reaction aldehydo-D-ribose 5-phosphate = D-ribulose 5-phosphate. Its pathway is carbohydrate degradation; pentose phosphate pathway; D-ribose 5-phosphate from D-ribulose 5-phosphate (non-oxidative stage): step 1/1. Functionally, catalyzes the reversible conversion of ribose-5-phosphate to ribulose 5-phosphate. This is Ribose-5-phosphate isomerase A from Alcanivorax borkumensis (strain ATCC 700651 / DSM 11573 / NCIMB 13689 / SK2).